The sequence spans 482 residues: U2 small nuclear ribonucleoprotein auxiliary factor 35 kDa subunit-related protein 2 (482 aa).

The segment at 1 to 59 (MAAPEKMTFPEKPSHKKYRAALKKEKRKKRRQELARLRDSGLSQKEEEEDTFIEEQQLE) is disordered. Residues 14–31 (SHKKYRAALKKEKRKKRR) show a composition bias toward basic residues. A Glycyl lysine isopeptide (Lys-Gly) (interchain with G-Cter in SUMO2) cross-link involves residue K45. A compositionally biased stretch (acidic residues) spans 46–58 (EEEEDTFIEEQQL). K62 participates in a covalent cross-link: Glycyl lysine isopeptide (Lys-Gly) (interchain with G-Cter in SUMO2). The tract at residues 115-135 (QRKEREEEEQKRQEKKEKEEA) is disordered. The C3H1-type 1 zinc finger occupies 166-194 (EKDRANCPFYSKTGACRFGDRCSRKHNFP). Positions 198–304 (PTLLIKSMFT…RQLQCEFCPV (107 aa)) constitute an RRM domain. A C3H1-type 2 zinc finger spans residues 306 to 333 (RWKMAICGLFEIQQCPRGKHCNFLHVFR). S349 is subject to Phosphoserine. Positions 351 to 482 (DRTGSSFGKN…DRTVQSPKSK (132 aa)) are disordered. Basic and acidic residues-rich tracts occupy residues 360–375 (NSERRERMGHHDDYYS) and 383–398 (PSPDHSYKRNGESERK). S384 is modified (phosphoserine). Residues 399–412 (SSRHRGKKSHKRTS) are compositionally biased toward basic residues. Residues 413–435 (KSRERHNSRSRGRNRDRSRDRSR) show a composition bias toward basic and acidic residues. Over residues 436–454 (GRGSRSRSRSRSRRSRRSR) the composition is skewed to basic residues.

In terms of assembly, component of the U11/U12 snRNPs that are part of the U12-type spliceosome. Interacts (via RS domain) with SRSF1 and SRSF2. Interacts with U2AF2/U2AF65. Post-translationally, phosphorylated in the RS domain by SRPK1. Widely expressed.

The protein localises to the nucleus. Its function is as follows. Pre-mRNA-binding protein required for splicing of both U2- and U12-type introns. Selectively interacts with the 3'-splice site of U2- and U12-type pre-mRNAs and promotes different steps in U2 and U12 intron splicing. Recruited to U12 pre-mRNAs in an ATP-dependent manner and is required for assembly of the pre-spliceosome, a precursor to other spliceosomal complexes. For U2-type introns, it is selectively and specifically required for the second step of splicing. This is U2 small nuclear ribonucleoprotein auxiliary factor 35 kDa subunit-related protein 2 (ZRSR2) from Homo sapiens (Human).